Here is a 236-residue protein sequence, read N- to C-terminus: Large ribosomal subunit protein uL3 (236 aa).

Belongs to the universal ribosomal protein uL3 family. Part of the 50S ribosomal subunit. Forms a cluster with proteins L14 and L19.

In terms of biological role, one of the primary rRNA binding proteins, it binds directly near the 3'-end of the 23S rRNA, where it nucleates assembly of the 50S subunit. This Anaeromyxobacter dehalogenans (strain 2CP-1 / ATCC BAA-258) protein is Large ribosomal subunit protein uL3.